A 272-amino-acid polypeptide reads, in one-letter code: Indole-3-glycerol phosphate synthase (272 aa).

Belongs to the TrpC family.

It carries out the reaction 1-(2-carboxyphenylamino)-1-deoxy-D-ribulose 5-phosphate + H(+) = (1S,2R)-1-C-(indol-3-yl)glycerol 3-phosphate + CO2 + H2O. It participates in amino-acid biosynthesis; L-tryptophan biosynthesis; L-tryptophan from chorismate: step 4/5. The chain is Indole-3-glycerol phosphate synthase from Mycolicibacterium gilvum (strain PYR-GCK) (Mycobacterium gilvum (strain PYR-GCK)).